The chain runs to 582 residues: SUMO-activating enzyme subunit uba-2 (582 aa).

Residues 20-25, aspartate 44, 52-55, lysine 68, 91-92, and 113-118 each bind ATP; these read GAGGIG, NLNR, SI, and DNRAAR. Residues cysteine 154 and cysteine 157 each contribute to the Zn(2+) site. Cysteine 170 acts as the Glycyl thioester intermediate in catalysis. A compositionally biased stretch (acidic residues) spans 204–214; the sequence is SPDMDAVDPDN. The segment at 204 to 235 is disordered; the sequence is SPDMDAVDPDNTEAVTTEKEKEAMKEEPAPVG. Basic and acidic residues predominate over residues 219 to 231; that stretch reads TTEKEKEAMKEEP. The Zn(2+) site is built by cysteine 431 and cysteine 434. The segment covering 531 to 570 has biased composition (basic and acidic residues); sequence FEVARSEKEPEPDDRKRKADGSEEPEAKRQKVEEKDDKNG. The interval 531 to 582 is disordered; it reads FEVARSEKEPEPDDRKRKADGSEEPEAKRQKVEEKDDKNGNEAVAEITETMA.

Belongs to the ubiquitin-activating E1 family. Heterodimer with aos-1.

Its pathway is protein modification; protein sumoylation. The dimeric enzyme acts as an E1 ligase for smo-1. It mediates ATP-dependent activation of smo-1 and formation of a thioester with a conserved cysteine residue on uba-2. The sequence is that of SUMO-activating enzyme subunit uba-2 (uba-2) from Caenorhabditis elegans.